The chain runs to 295 residues: Bifunctional protein FolD (295 aa).

Residues 169-171, threonine 196, and valine 237 contribute to the NADP(+) site; that span reads GRG.

It belongs to the tetrahydrofolate dehydrogenase/cyclohydrolase family. In terms of assembly, homodimer.

It carries out the reaction (6R)-5,10-methylene-5,6,7,8-tetrahydrofolate + NADP(+) = (6R)-5,10-methenyltetrahydrofolate + NADPH. It catalyses the reaction (6R)-5,10-methenyltetrahydrofolate + H2O = (6R)-10-formyltetrahydrofolate + H(+). It functions in the pathway one-carbon metabolism; tetrahydrofolate interconversion. Its function is as follows. Catalyzes the oxidation of 5,10-methylenetetrahydrofolate to 5,10-methenyltetrahydrofolate and then the hydrolysis of 5,10-methenyltetrahydrofolate to 10-formyltetrahydrofolate. This chain is Bifunctional protein FolD, found in Kineococcus radiotolerans (strain ATCC BAA-149 / DSM 14245 / SRS30216).